The sequence spans 141 residues: Oleosin L (141 aa).

Transmembrane regions (helical) follow at residues 23-43 (VLFF…LALA), 46-66 (VVLM…ILPV), and 74-94 (AAAF…LIWV). The short motif at 54-65 (PVFLLLSPVILP) is the Proline-knot element.

This sequence belongs to the oleosin family. Expressed in megagametophytes (at protein level).

It localises to the lipid droplet. The protein resides in the membrane. The chain is Oleosin L from Pinus massoniana (Chinese red pine).